The chain runs to 352 residues: tRNA pseudouridine synthase D (352 aa).

Aspartate 81 acts as the Nucleophile in catalysis. The 147-residue stretch at 157-303 (GVPNYFGTQR…MDHERRILRL (147 aa)) folds into the TRUD domain.

Belongs to the pseudouridine synthase TruD family.

It carries out the reaction uridine(13) in tRNA = pseudouridine(13) in tRNA. Functionally, responsible for synthesis of pseudouridine from uracil-13 in transfer RNAs. The sequence is that of tRNA pseudouridine synthase D from Pseudomonas putida (strain GB-1).